Reading from the N-terminus, the 857-residue chain is Bifunctional levopimaradiene synthase, chloroplastic (857 aa).

A chloroplast-targeting transit peptide spans 1-33; the sequence is MALPSSSLSSQIHTGATTQCIPHFHGSLNAGTS. Substrate is bound at residue Lys257. Mg(2+) is bound by residues Asp390 and Asp392. The DXDD motif signature appears at 390–393; it reads DIDD. A substrate-binding site is contributed by Lys477. Residues Asp609, Asp613, Asn753, Thr757, and Glu761 each contribute to the Mg(2+) site. Positions 609 to 613 match the DDXXD motif motif; that stretch reads DDLYD.

This sequence belongs to the terpene synthase family. Tpsd subfamily. The cofactor is Mg(2+).

It localises to the plastid. The protein localises to the chloroplast. The catalysed reaction is (2E,6E,10E)-geranylgeranyl diphosphate = (+)-copalyl diphosphate. It catalyses the reaction (+)-copalyl diphosphate = abieta-7,13-diene + diphosphate. The enzyme catalyses (+)-copalyl diphosphate = abieta-8(14),12-diene + diphosphate. It carries out the reaction (+)-copalyl diphosphate = neoabietadiene + diphosphate. Its pathway is terpene metabolism; oleoresin biosynthesis. Its function is as follows. Involved in defensive oleoresin formation in conifers in response to insect attack or other injury. Involved in diterpene (C20) olefins biosynthesis. Bifunctional enzyme that catalyzes two sequential cyclizations of geranylgeranyl diphosphate (GGPP) to levopimaradiene. Levopimaradiene is the major products of the enzyme with abietadiene and neoabietadiene. No activity with farnesyl diphosphate (FPP) as substrate. The protein is Bifunctional levopimaradiene synthase, chloroplastic of Pinus contorta (Shore pine).